Consider the following 64-residue polypeptide: Basic secretory protease (64 aa).

A divalent metal cation serves as cofactor. In terms of processing, glycosylated.

Its activity is regulated as follows. Inhibited by EDTA. Its function is as follows. Metalloprotease, digests gelatin and azocasein (in vitro). The protein is Basic secretory protease of Boswellia serrata (Indian frankincense).